The primary structure comprises 811 residues: RFX-like DNA-binding protein RFX1 (811 aa).

2 disordered regions span residues 48 to 92 and 111 to 156; these read EPTS…TYLP and LLHQ…QRQP. Low complexity predominate over residues 51–70; the sequence is SRGSNDNSNGPSNGSSVNSN. The span at 140–149 shows a compositional bias: pro residues; sequence SPTPTQPPAQ. Serine 173 carries the post-translational modification Phosphoserine. A disordered region spans residues 181–222; the sequence is KSEETLNNNPPTAAKRTNTFPSIPSSTKKQKTSQEKRISSIS. Positions 185-204 are enriched in polar residues; sequence TLNNNPPTAAKRTNTFPSIP. The RFX-type winged-helix DNA-binding region spans 285 to 360; that stretch reads ALLWLMKNCK…YHYCGLKLTV (76 aa). The span at 377-391 shows a compositional bias: low complexity; that stretch reads LVHNNDPISPLSSPS. A disordered region spans residues 377–461; it reads LVHNNDPISP…AANNPTGTLS (85 aa). Positions 409–428 are enriched in polar residues; it reads NRKSLSRTGSPVKQSSNDNP. A compositionally biased stretch (basic and acidic residues) spans 434–445; that stretch reads ESQHPNETEANK.

This sequence belongs to the RFX family.

This chain is RFX-like DNA-binding protein RFX1 (RFX1), found in Saccharomyces cerevisiae (strain ATCC 204508 / S288c) (Baker's yeast).